Consider the following 338-residue polypeptide: Ketol-acid reductoisomerase (NADP(+)) (338 aa).

Residues 1–181 (MQVYYDKDCD…GGGRTGIIET (181 aa)) enclose the KARI N-terminal Rossmann domain. NADP(+) is bound by residues 24-27 (YGSQ), Arg47, Ser50, Ser52, and 82-85 (DEFQ). His107 is a catalytic residue. An NADP(+)-binding site is contributed by Gly133. One can recognise a KARI C-terminal knotted domain in the interval 182–327 (TFKDETETDL…EKLRAMMPWI (146 aa)). The Mg(2+) site is built by Asp190, Glu194, Glu226, and Glu230. Ser251 is a substrate binding site.

Belongs to the ketol-acid reductoisomerase family. Requires Mg(2+) as cofactor.

It carries out the reaction (2R)-2,3-dihydroxy-3-methylbutanoate + NADP(+) = (2S)-2-acetolactate + NADPH + H(+). The catalysed reaction is (2R,3R)-2,3-dihydroxy-3-methylpentanoate + NADP(+) = (S)-2-ethyl-2-hydroxy-3-oxobutanoate + NADPH + H(+). It functions in the pathway amino-acid biosynthesis; L-isoleucine biosynthesis; L-isoleucine from 2-oxobutanoate: step 2/4. The protein operates within amino-acid biosynthesis; L-valine biosynthesis; L-valine from pyruvate: step 2/4. Functionally, involved in the biosynthesis of branched-chain amino acids (BCAA). Catalyzes an alkyl-migration followed by a ketol-acid reduction of (S)-2-acetolactate (S2AL) to yield (R)-2,3-dihydroxy-isovalerate. In the isomerase reaction, S2AL is rearranged via a Mg-dependent methyl migration to produce 3-hydroxy-3-methyl-2-ketobutyrate (HMKB). In the reductase reaction, this 2-ketoacid undergoes a metal-dependent reduction by NADPH to yield (R)-2,3-dihydroxy-isovalerate. The chain is Ketol-acid reductoisomerase (NADP(+)) from Teredinibacter turnerae (strain ATCC 39867 / T7901).